Reading from the N-terminus, the 364-residue chain is DNA replication and repair protein RecF (364 aa).

30-37 (GNNAQGKT) lines the ATP pocket.

It belongs to the RecF family.

It is found in the cytoplasm. In terms of biological role, the RecF protein is involved in DNA metabolism; it is required for DNA replication and normal SOS inducibility. RecF binds preferentially to single-stranded, linear DNA. It also seems to bind ATP. This Streptococcus uberis (strain ATCC BAA-854 / 0140J) protein is DNA replication and repair protein RecF.